Reading from the N-terminus, the 423-residue chain is Protein MANNAN SYNTHESIS-RELATED 2 (423 aa).

The Cytoplasmic segment spans residues 1-6 (MGVDLR). The helical; Signal-anchor for type II membrane protein transmembrane segment at 7–26 (QVVAGILTITMFVMLGQMLH) threads the bilayer. Residues 27 to 423 (RDYFDAVQEK…KNHLAYSCFC (397 aa)) lie on the Lumenal side of the membrane. Position 264 to 266 (264 to 266 (DLR)) interacts with substrate.

This sequence belongs to the glycosyltransferase GT106 family. As to expression, widely expressed.

It is found in the golgi apparatus membrane. Its pathway is glycan biosynthesis. In terms of biological role, glycosyltransferase involved in mannan biosynthesis. The polypeptide is Protein MANNAN SYNTHESIS-RELATED 2 (Arabidopsis thaliana (Mouse-ear cress)).